The primary structure comprises 418 residues: MAGRLPACVVDCGTGYTKLGYAGNTEPQFIIPSCIAIKESAKVGDQAQRRVMKGVDDLDFFIGDEAIEKPTYATKWPIRHGIVEDWDLMERFMEQVIFKYLRAEPEDHYFLLTEPPLNTPENREYTAEIMFESFNVPGLYIAVQAVLALAASWTSRQVGERTLTGTVIDSGDGVTHVIPVAEGYVIGSCIKHIPIAGRDITYFIQQLLRDREVGIPPEQSLETAKAVKERYSYVCPDLVKEFNKYDTDGSKWIKQYTGVNAISKKEFSIDVGYERFLGPEIFFHPEFANPDFTQPISEVVDEVIQNCPIDVRRPLYKNIVLSGGSTMFRDFGRRLQRDLKRTVDARLKLSEELSGGRLKPKPIDVQVITHHMQRYAVWFGGSMLASTPEFYQVCHTKKDYEEIGPSICRHNPVFGVMS.

Residue Ala-2 is modified to N-acetylalanine. N6-acetyllysine occurs at positions 240, 244, 251, and 254.

The protein belongs to the actin family. ARP3 subfamily. In terms of assembly, component of the Arp2/3 complex composed of ACTR2/ARP2, ACTR3/ARP3, ARPC1B/p41-ARC, ARPC2/p34-ARC, ARPC3/p21-ARC, ARPC4/p20-ARC and ARPC5/p16-ARC. Interacts with WHDC1. Interacts weakly with MEFV. Interacts with AVIL. As to quaternary structure, (Microbial infection) Interacts with bacterium B.thailandensis BimA.

It localises to the cytoplasm. The protein resides in the cytoskeleton. It is found in the cell projection. Its subcellular location is the nucleus. ATP-binding component of the Arp2/3 complex, a multiprotein complex that mediates actin polymerization upon stimulation by nucleation-promoting factor (NPF). The Arp2/3 complex mediates the formation of branched actin networks in the cytoplasm, providing the force for cell motility. Seems to contact the pointed end of the daughter actin filament. In podocytes, required for the formation of lamellipodia downstream of AVIL and PLCE1 regulation. In addition to its role in the cytoplasmic cytoskeleton, the Arp2/3 complex also promotes actin polymerization in the nucleus, thereby regulating gene transcription and repair of damaged DNA. The Arp2/3 complex promotes homologous recombination (HR) repair in response to DNA damage by promoting nuclear actin polymerization, leading to drive motility of double-strand breaks (DSBs). Plays a role in ciliogenesis. This chain is Actin-related protein 3 (Actr3), found in Mus musculus (Mouse).